The following is a 180-amino-acid chain: UPF0227 protein YcfP (180 aa).

It belongs to the UPF0227 family.

This chain is UPF0227 protein YcfP, found in Escherichia coli O139:H28 (strain E24377A / ETEC).